We begin with the raw amino-acid sequence, 318 residues long: L-lactate dehydrogenase (318 aa).

Residues valine 14, aspartate 35, lysine 40, and tyrosine 66 each coordinate NAD(+). Residues arginine 89 and 121–124 (NPVD) contribute to the substrate site. An NAD(+)-binding site is contributed by serine 144. 149–152 (DTAR) contributes to the substrate binding site. Histidine 176 acts as the Proton acceptor in catalysis. Residue tyrosine 220 is modified to Phosphotyrosine. A substrate-binding site is contributed by threonine 229.

This sequence belongs to the LDH/MDH superfamily. LDH family. Homotetramer.

The protein resides in the cytoplasm. The catalysed reaction is (S)-lactate + NAD(+) = pyruvate + NADH + H(+). It functions in the pathway fermentation; pyruvate fermentation to lactate; (S)-lactate from pyruvate: step 1/1. Catalyzes the conversion of lactate to pyruvate. The protein is L-lactate dehydrogenase of Staphylococcus haemolyticus (strain JCSC1435).